A 257-amino-acid chain; its full sequence is Phosphonates import ATP-binding protein PhnC (257 aa).

Residues I4–L248 form the ABC transporter domain. An ATP-binding site is contributed by G37–S44.

This sequence belongs to the ABC transporter superfamily. Phosphonates importer (TC 3.A.1.9.1) family. As to quaternary structure, the complex is composed of two ATP-binding proteins (PhnC), two transmembrane proteins (PhnE) and a solute-binding protein (PhnD).

It localises to the cell membrane. It carries out the reaction phosphonate(out) + ATP + H2O = phosphonate(in) + ADP + phosphate + H(+). In terms of biological role, part of the ABC transporter complex PhnCDE involved in phosphonates import. Responsible for energy coupling to the transport system. The protein is Phosphonates import ATP-binding protein PhnC of Staphylococcus haemolyticus (strain JCSC1435).